We begin with the raw amino-acid sequence, 589 residues long: LRR receptor-like serine/threonine-protein kinase FEI 2 (589 aa).

The first 28 residues, 1 to 28 (MGICLMKRCCSWFLLISFLSALTNENEA), serve as a signal peptide directing secretion. Topologically, residues 29-236 (ISPDGEALLS…TGQGGNNPKR (208 aa)) are extracellular. 5 LRR repeats span residues 72-96 (TKRVIALSLTYHKLRGPLPPELGKL), 97-120 (DQLRLLMLHNNALYQSIPASLGNC), 122-144 (ALEGIYLQNNYITGTIPSEIGNL), 145-168 (SGLKNLDLSNNNLNGAIPASLGQL), and 170-193 (RLTKFNVSNNFLVGKIPSDGLLAR). N119 and N143 each carry an N-linked (GlcNAc...) asparagine glycan. 3 N-linked (GlcNAc...) asparagine glycosylation sites follow: N175, N215, and N219. A helical transmembrane segment spans residues 237–257 (LLISASATVGGLLLVALMCFW). Topologically, residues 258–589 (GCFLYKKLGR…PSDFYDSSSD (332 aa)) are cytoplasmic. The region spanning 304-576 (LNEEHIIGCG…VVQLLESEVM (273 aa)) is the Protein kinase domain. ATP contacts are provided by residues 310 to 318 (IGCGGFGTV) and K332. Position 384 is a phosphoserine (S384). D427 functions as the Proton acceptor in the catalytic mechanism. Phosphothreonine occurs at positions 460, 461, and 466. Y474 is subject to Phosphotyrosine.

It belongs to the protein kinase superfamily. Ser/Thr protein kinase family. In terms of assembly, interacts with the ACC synthases ACS5 and ACS9 but not ACS2, via the kinase domain. Autophosphorylated. Expressed in the root meristem and elongation zone, and in hypocotyls of etiolated seedlings.

It is found in the cell membrane. It carries out the reaction L-seryl-[protein] + ATP = O-phospho-L-seryl-[protein] + ADP + H(+). It catalyses the reaction L-threonyl-[protein] + ATP = O-phospho-L-threonyl-[protein] + ADP + H(+). Involved in the signaling pathway that regulates cell wall function, including cellulose biosynthesis, likely via an 1-aminocyclopropane-1-carboxylic acid (ACC)-mediated signal (a precursor of ethylene). This is LRR receptor-like serine/threonine-protein kinase FEI 2 (FEI2) from Arabidopsis thaliana (Mouse-ear cress).